The chain runs to 467 residues: Asparagine--tRNA ligase (467 aa).

Belongs to the class-II aminoacyl-tRNA synthetase family. In terms of assembly, homodimer.

The protein resides in the cytoplasm. It carries out the reaction tRNA(Asn) + L-asparagine + ATP = L-asparaginyl-tRNA(Asn) + AMP + diphosphate + H(+). The polypeptide is Asparagine--tRNA ligase (Actinobacillus succinogenes (strain ATCC 55618 / DSM 22257 / CCUG 43843 / 130Z)).